Consider the following 111-residue polypeptide: Irditoxin subunit B (111 aa).

Residues 1–19 (MKTLLLAVAVVAFVCLGSA) form the signal peptide. Residues 20 to 34 (DQLGLGRQQIDWGKG) constitute a propeptide that is removed on maturation. Glutamine 35 is modified (pyrrolidone carboxylic acid). 5 disulfide bridges follow: cysteine 44/cysteine 68, cysteine 47/cysteine 55, cysteine 61/cysteine 87, cysteine 91/cysteine 102, and cysteine 103/cysteine 108.

This sequence belongs to the three-finger toxin family. Ancestral subfamily. Boigatoxin sub-subfamily. Heterodimer of A and B chains; disulfide-linked. In terms of tissue distribution, expressed by the venom gland.

Its subcellular location is the secreted. In terms of biological role, this bird and reptile-specific postsynaptic neurotoxin inhibits the chick muscle alpha-1-beta-1-gamma-delta (CHRNA1-CHRNB1-CHRNG-CHRND) nicotinic acetylcholine receptor (nAChR) 100-fold more compared with the mouse receptor. In vivo, produces rapid flaccid paralysis, dyspnea and increased respiratory rate in geckos. At sublethal doses geckos were immobilized for up to three days and then recovered. Chicks injected with lethal doses showed rapid onset of inactivity, dyspnea and neck droop, and no extended paralysis with survival was seen. The chain is Irditoxin subunit B from Boiga irregularis (Brown tree snake).